The primary structure comprises 493 residues: Ribose import ATP-binding protein RbsA (493 aa).

ABC transporter domains lie at 3-239 (IKMK…VGRE) and 252-493 (GRVV…TGGR). Position 35–42 (35–42 (GENGAGKS)) interacts with ATP.

It belongs to the ABC transporter superfamily. Ribose importer (TC 3.A.1.2.1) family. As to quaternary structure, the complex is composed of an ATP-binding protein (RbsA), two transmembrane proteins (RbsC) and a solute-binding protein (RbsB).

The protein localises to the cell membrane. The enzyme catalyses D-ribose(out) + ATP + H2O = D-ribose(in) + ADP + phosphate + H(+). Its function is as follows. Part of the ABC transporter complex RbsABC involved in ribose import. Responsible for energy coupling to the transport system. The polypeptide is Ribose import ATP-binding protein RbsA (Bacillus licheniformis (strain ATCC 14580 / DSM 13 / JCM 2505 / CCUG 7422 / NBRC 12200 / NCIMB 9375 / NCTC 10341 / NRRL NRS-1264 / Gibson 46)).